We begin with the raw amino-acid sequence, 362 residues long: 3-dehydroquinate synthase (362 aa).

NAD(+)-binding positions include 71 to 76, 105 to 109, 129 to 130, Lys-142, Lys-151, and 169 to 172; these read DGEQYK, GVVGD, TT, and CLKT. Zn(2+) is bound by residues Glu-184, His-247, and His-264.

It belongs to the sugar phosphate cyclases superfamily. Dehydroquinate synthase family. Requires NAD(+) as cofactor. The cofactor is Co(2+). It depends on Zn(2+) as a cofactor.

It is found in the cytoplasm. The catalysed reaction is 7-phospho-2-dehydro-3-deoxy-D-arabino-heptonate = 3-dehydroquinate + phosphate. It participates in metabolic intermediate biosynthesis; chorismate biosynthesis; chorismate from D-erythrose 4-phosphate and phosphoenolpyruvate: step 2/7. Its function is as follows. Catalyzes the conversion of 3-deoxy-D-arabino-heptulosonate 7-phosphate (DAHP) to dehydroquinate (DHQ). The polypeptide is 3-dehydroquinate synthase (Shigella flexneri).